We begin with the raw amino-acid sequence, 241 residues long: Ribosome-inactivating protein luffaculin 1 (241 aa).

N-linked (GlcNAc...) asparagine glycans are attached at residues N28, N33, N77, and N84. E159 is an active-site residue. A glycan (N-linked (GlcNAc...) asparagine) is linked at N205.

Belongs to the ribosome-inactivating protein family. Type 1 RIP subfamily.

The enzyme catalyses Endohydrolysis of the N-glycosidic bond at one specific adenosine on the 28S rRNA.. This is Ribosome-inactivating protein luffaculin 1 from Luffa acutangula (Ridged gourd).